The following is a 277-amino-acid chain: uncharacterized protein (277 aa).

Transmembrane regions (helical) follow at residues 23-43, 61-81, 117-137, 144-164, 197-217, 221-241, and 243-263; these read CIGGLMSAIVGAMSGVTTAFI, FLIYFGIIFIIGLIVSAIIGG, LVLLNIIFYFIPAILFVFGIF, IIGAFLIIISILIFIISVISL, YIILVIIIAIINFIISLIVVL, IIDIFISYSALANSILTIIYI, and IKGISYALSTFVDFYLGVFSI.

It to M.jannaschii MJ1189.

It localises to the cell membrane. This is an uncharacterized protein from Methanocaldococcus jannaschii (strain ATCC 43067 / DSM 2661 / JAL-1 / JCM 10045 / NBRC 100440) (Methanococcus jannaschii).